The sequence spans 408 residues: Heparan-sulfate 6-O-sulfotransferase 1 (408 aa).

At Met-8–Lys-14 the chain is on the cytoplasmic side. The chain crosses the membrane as a helical; Signal-anchor for type II membrane protein span at residues Phe-15–Pro-35. At Gly-36 to Trp-408 the chain is on the lumenal side. Position 90 to 98 (His-90 to Thr-98) interacts with 3'-phosphoadenylyl sulfate. Residues Lys-120–Lys-121, Arg-137, Trp-142, and His-147 contribute to the substrate site. The active-site Proton acceptor is His-147. Arg-182 and Ser-190 together coordinate 3'-phosphoadenylyl sulfate. Residues His-194 and Trp-201 each coordinate substrate. N-linked (GlcNAc...) asparagine glycosylation occurs at Asn-261. Met-314 to Tyr-316 is a 3'-phosphoadenylyl sulfate binding site. Asn-317 carries an N-linked (GlcNAc...) asparagine glycan. Arg-320–Ala-321 contributes to the 3'-phosphoadenylyl sulfate binding site. A glycan (N-linked (GlcNAc...) asparagine) is linked at Asn-328. Positions Ala-348–Glu-382 form a coiled coil. Residues Leu-376–Pro-396 form a disordered region.

It belongs to the sulfotransferase 6 family. N-glycosylated.

The protein resides in the membrane. It carries out the reaction alpha-D-glucosaminyl-[heparan sulfate](n) + 3'-phosphoadenylyl sulfate = 6-sulfo-alpha-D-glucosaminyl-[heparan sulfate](n) + adenosine 3',5'-bisphosphate + H(+). 6-O-sulfation enzyme which catalyzes the transfer of sulfate from 3'-phosphoadenosine 5'-phosphosulfate (PAPS) to position 6 of the N-sulfoglucosamine residue (GlcNS) of heparan sulfate. May also play a role in limb development. The polypeptide is Heparan-sulfate 6-O-sulfotransferase 1 (Gallus gallus (Chicken)).